The following is a 606-amino-acid chain: Phosphogluconate dehydratase (606 aa).

[4Fe-4S] cluster contacts are provided by C156 and C223.

Belongs to the IlvD/Edd family. [4Fe-4S] cluster serves as cofactor.

It carries out the reaction 6-phospho-D-gluconate = 2-dehydro-3-deoxy-6-phospho-D-gluconate + H2O. Its pathway is carbohydrate metabolism; Entner-Doudoroff pathway. In terms of biological role, catalyzes the dehydration of 6-phospho-D-gluconate to 2-dehydro-3-deoxy-6-phospho-D-gluconate. This Rhizobium meliloti (strain 1021) (Ensifer meliloti) protein is Phosphogluconate dehydratase.